We begin with the raw amino-acid sequence, 103 residues long: Large ribosomal subunit protein eL14 (103 aa).

It belongs to the eukaryotic ribosomal protein eL14 family.

This Pyrobaculum islandicum (strain DSM 4184 / JCM 9189 / GEO3) protein is Large ribosomal subunit protein eL14.